The chain runs to 217 residues: Ribonuclease HII (217 aa).

An RNase H type-2 domain is found at 16–217 (YCIAGVDEVG…VARVLGTYHD (202 aa)). Residues D22, E23, and D114 each coordinate a divalent metal cation.

It belongs to the RNase HII family. The cofactor is Mn(2+). It depends on Mg(2+) as a cofactor.

The protein resides in the cytoplasm. The enzyme catalyses Endonucleolytic cleavage to 5'-phosphomonoester.. Endonuclease that specifically degrades the RNA of RNA-DNA hybrids. In Colwellia psychrerythraea (strain 34H / ATCC BAA-681) (Vibrio psychroerythus), this protein is Ribonuclease HII.